An 89-amino-acid polypeptide reads, in one-letter code: Phosphocarrier protein HPr (89 aa).

In terms of domain architecture, HPr spans 1–88; sequence MLEHELIVTN…ELFENRFNED (88 aa). Catalysis depends on H15, which acts as the Pros-phosphohistidine intermediate. Residue S46 is modified to Phosphoserine; by HPrK/P.

Belongs to the HPr family.

The protein resides in the cytoplasm. With respect to regulation, phosphorylation on Ser-46 inhibits the phosphoryl transfer from enzyme I to HPr. General (non sugar-specific) component of the phosphoenolpyruvate-dependent sugar phosphotransferase system (sugar PTS). This major carbohydrate active-transport system catalyzes the phosphorylation of incoming sugar substrates concomitantly with their translocation across the cell membrane. The phosphoryl group from phosphoenolpyruvate (PEP) is transferred to the phosphoryl carrier protein HPr by enzyme I. Phospho-HPr then transfers it to the PTS EIIA domain. The polypeptide is Phosphocarrier protein HPr (ptsH) (Xylella fastidiosa (strain 9a5c)).